A 118-amino-acid polypeptide reads, in one-letter code: Large ribosomal subunit protein bL19 (118 aa).

It belongs to the bacterial ribosomal protein bL19 family.

This protein is located at the 30S-50S ribosomal subunit interface and may play a role in the structure and function of the aminoacyl-tRNA binding site. This Helicobacter pylori (strain P12) protein is Large ribosomal subunit protein bL19.